Here is a 333-residue protein sequence, read N- to C-terminus: Biotin synthase (333 aa).

Residues 51-281 (HFGNQVSLCG…DVHITICGGR (231 aa)) form the Radical SAM core domain. [4Fe-4S] cluster contacts are provided by Cys69, Cys73, and Cys76. [2Fe-2S] cluster is bound at residue Cys206.

This sequence belongs to the radical SAM superfamily. Biotin synthase family. As to quaternary structure, homodimer. It depends on [4Fe-4S] cluster as a cofactor. The cofactor is [2Fe-2S] cluster.

The catalysed reaction is (4R,5S)-dethiobiotin + (sulfur carrier)-SH + 2 reduced [2Fe-2S]-[ferredoxin] + 2 S-adenosyl-L-methionine = (sulfur carrier)-H + biotin + 2 5'-deoxyadenosine + 2 L-methionine + 2 oxidized [2Fe-2S]-[ferredoxin]. The protein operates within cofactor biosynthesis; biotin biosynthesis; biotin from 7,8-diaminononanoate: step 2/2. Functionally, catalyzes the conversion of dethiobiotin (DTB) to biotin by the insertion of a sulfur atom into dethiobiotin via a radical-based mechanism. The sequence is that of Biotin synthase from Trichlorobacter lovleyi (strain ATCC BAA-1151 / DSM 17278 / SZ) (Geobacter lovleyi).